A 196-amino-acid chain; its full sequence is MSAANMPTTTGAQGSGNQVPTTSTTIVNHFRELIKDPKNLDEASNYLFQTLLDDAVVGIFNETHHLRKSGNLAALDGVPEDSTYRMCEMPNLDIFGISTAKKPMDCTCPNCDRLVAAARFAPHLEKCMGMGRISSRIASRRLATKEGATSAHLHSAGNTGGTDDEDDVDWSSDKRRKKSNQNSRNNGSKKNNGKSF.

Positions 1–22 (MSAANMPTTTGAQGSGNQVPTT) are disordered. The segment at 106-127 (CTCPNCDRLVAAARFAPHLEKC) adopts an SGF11-type zinc-finger fold. Residues 144–196 (TKEGATSAHLHSAGNTGGTDDEDDVDWSSDKRRKKSNQNSRNNGSKKNNGKSF) are disordered. At serine 172 the chain carries Phosphoserine. A compositionally biased stretch (low complexity) spans 180-196 (NQNSRNNGSKKNNGKSF).

It belongs to the SGF11 family. In terms of assembly, component of some SAGA transcription coactivator-HAT complexes, at least composed of Ada2b, not/nonstop, Pcaf/Gcn5, Sgf11 and Spt3. Within the SAGA complex, Sgf11, e(y)2, and not/nonstop form an additional subcomplex of SAGA called the DUB module (deubiquitination module). Interacts directly with not/nonstop. Interacts with the AMEX complex component xmas-2. Interacts with Cbp80; important for promoter recruitment of Sgf11 that is not associated with the DUB module.

It is found in the nucleus. The protein resides in the nucleoplasm. It localises to the cytoplasm. Functionally, component of the transcription regulatory histone acetylation (HAT) complex SAGA, a multiprotein complex that activates transcription by remodeling chromatin and mediating histone acetylation and deubiquitination. Within the SAGA complex, participates in a subcomplex that specifically deubiquitinates histone H2B. The SAGA complex is recruited to specific gene promoters by activators, where it is required for transcription. Required for nuclear receptor-mediated transactivation. Binds independently on SAGA to promoters in an RNA-dependent manner. Binds to mRNA and is essential for total mRNA export from the nucleus. Required to counteract heterochromatin silencing. Controls the development of neuronal connectivity in visual system by being required for accurate axon targeting in the optic lobe. Required for expression of ecdysone-induced genes such as br/broad. The chain is SAGA-associated factor 11 homolog from Drosophila erecta (Fruit fly).